The following is an 82-amino-acid chain: Small ribosomal subunit protein bS16 (82 aa).

The protein belongs to the bacterial ribosomal protein bS16 family.

The sequence is that of Small ribosomal subunit protein bS16 from Klebsiella pneumoniae (strain 342).